Reading from the N-terminus, the 464-residue chain is DNA primase DnaG (464 aa).

In terms of domain architecture, Toprim spans 198-272 (DSIIVVEGRA…DVDYVARAPE (75 aa)). Mg(2+)-binding residues include Glu-204, Asp-246, and Asp-248. The segment covering 315–333 (RESEGERQPRQVTKPEPEV) has biased composition (basic and acidic residues). The tract at residues 315-351 (RESEGERQPRQVTKPEPEVVKAQPKAETPEEKREPAT) is disordered.

The protein belongs to the archaeal DnaG primase family. As to quaternary structure, forms a ternary complex with MCM helicase and DNA. Component of the archaeal exosome complex. Mg(2+) serves as cofactor.

The enzyme catalyses ssDNA + n NTP = ssDNA/pppN(pN)n-1 hybrid + (n-1) diphosphate.. RNA polymerase that catalyzes the synthesis of short RNA molecules used as primers for DNA polymerase during DNA replication. Also part of the exosome, which is a complex involved in RNA degradation. Acts as a poly(A)-binding protein that enhances the interaction between heteromeric, adenine-rich transcripts and the exosome. This is DNA primase DnaG from Thermococcus kodakarensis (strain ATCC BAA-918 / JCM 12380 / KOD1) (Pyrococcus kodakaraensis (strain KOD1)).